The primary structure comprises 94 residues: MRLTTMHSVILMLLLVFAFDNVDGDEPGQTARDVDNRNFMSILRSEGKPVHFLRAIKKRDCTGQACTTGDNCPSECVCNEHHFCTGKCCYFLHA.

The first 24 residues, M1–G24, serve as a signal peptide directing secretion. Positions D25–R59 are excised as a propeptide.

Post-translationally, contains 4 disulfide bonds. As to expression, expressed by the venom duct.

It is found in the secreted. Functionally, probable neurotoxin. The sequence is that of Conotoxin Im026 from Conus imperialis (Imperial cone).